The sequence spans 76 residues: Large ribosomal subunit protein eL20 (76 aa).

Belongs to the eukaryotic ribosomal protein eL20 family. In terms of assembly, part of the 50S ribosomal subunit. Binds 23S rRNA.

This chain is Large ribosomal subunit protein eL20, found in Methanococcus maripaludis (strain C6 / ATCC BAA-1332).